A 541-amino-acid chain; its full sequence is Protein wntless homolog (541 aa).

The Cytoplasmic portion of the chain corresponds to 1–15 (MAGAIIENMSTKKLC). Residues 16 to 36 (IVGGILLVFQIVAFLVGGLIA) form a helical membrane-spanning segment. At 37–232 (PAPTTAVSYV…GIHQNGGFTK (196 aa)) the chain is on the lumenal side. The tract at residues 101–202 (MEMSPWFQFM…KYYLLNIRLP (102 aa)) is interaction with Wnt proteins. The chain crosses the membrane as a helical span at residues 233 to 253 (VWFAMKTFLTPSIFIIMVWYW). Over 254–268 (RRITMMSRPPVLLEK) the chain is Cytoplasmic. A helical membrane pass occupies residues 269–289 (VIFALGISMTFINIPVEWFSI). At 290 to 303 (GFDWTWMLLFGDIR) the chain is on the lumenal side. A helical membrane pass occupies residues 304 to 324 (QGIFYAMLLSFWIIFCGEHMM). At 325–331 (DQHERNH) the chain is on the cytoplasmic side. The helical transmembrane segment at 332 to 352 (IAGYWKQVGPIAVGSFCLFIF) threads the bilayer. Over 353–380 (DMCERGVQLTNPFYSIWTTDVGTELAMA) the chain is Lumenal. Residues 381–401 (FIIVAGICLCLYFLFLCFMVF) form a helical membrane-spanning segment. The Cytoplasmic portion of the chain corresponds to 402–431 (QVFRNISGKQSSLPAMSKVRRLHYEGLIFR). The chain crosses the membrane as a helical span at residues 432 to 452 (FKFLMLITLACAAMTVIFFIV). At 453 to 471 (SQVTEGHWKWGGVTVQVSS) the chain is on the lumenal side. A helical membrane pass occupies residues 472-492 (AFFTGIYGMWNLYVFALMFLY). Topologically, residues 493-541 (APSHKNYGEDQSNGDLGVHSGEELQLTTTITHVDGPTEIYKLTRKEAQE) are cytoplasmic.

The protein belongs to the wntless family. Interacts with WNT3A. Interacts with WNT1, WNT3 and WNT5A. N-glycosylated. In terms of tissue distribution, expressed in the brain, skeletal muscle, heart muscle, lung, gut, liver, and kidney (at protein level). In the brain, expressed in the cortex, striatum, ventral tegmentum, nucleus accumbens and to a lesser extent in the Purkinjie cells in the cerebellum. Expressed in eye iridocorneal angle.

Its subcellular location is the golgi apparatus membrane. It is found in the cytoplasmic vesicle membrane. The protein localises to the cell membrane. The protein resides in the endoplasmic reticulum membrane. It localises to the early endosome membrane. Functionally, regulates Wnt proteins sorting and secretion in a feedback regulatory mechanism. This reciprocal interaction plays a key role in the regulation of expression, subcellular location, binding and organelle-specific association of Wnt proteins. Also plays an important role in establishment of the anterior-posterior body axis formation during development. This Rattus norvegicus (Rat) protein is Protein wntless homolog (Wls).